The following is a 36-amino-acid chain: Photosystem I reaction center subunit VIII (36 aa).

Residues 9 to 29 form a helical membrane-spanning segment; it reads ILVPLVGLVFPAITMVSLFLY.

This sequence belongs to the PsaI family.

Its subcellular location is the plastid. The protein resides in the chloroplast thylakoid membrane. Its function is as follows. May help in the organization of the PsaL subunit. This Zygnema circumcarinatum (Green alga) protein is Photosystem I reaction center subunit VIII.